Reading from the N-terminus, the 434-residue chain is Cyclic 2,3-diphosphoglycerate synthetase (434 aa).

It belongs to the cyclic 2,3-diphosphoglycerate synthetase family.

It is found in the cytoplasm. It carries out the reaction (2R)-2,3-bisphosphoglycerate + ATP + H(+) = cyclic (2R)-2,3-bisphosphoglycerate + ADP + phosphate. Functionally, catalyzes the formation of cyclic 2,3-diphosphoglycerate (cDPG) by formation of an intramolecular phosphoanhydride bond at the expense of ATP. The chain is Cyclic 2,3-diphosphoglycerate synthetase from Thermococcus sibiricus (strain DSM 12597 / MM 739).